A 345-amino-acid polypeptide reads, in one-letter code: tRNA dimethylallyltransferase (345 aa).

9 to 16 (GPTASGKS) is an ATP binding site. A substrate-binding site is contributed by 11–16 (TASGKS). Interaction with substrate tRNA stretches follow at residues 34 to 37 (DSMQ) and 195 to 199 (QRMIR).

It belongs to the IPP transferase family. As to quaternary structure, monomer. Mg(2+) is required as a cofactor.

It catalyses the reaction adenosine(37) in tRNA + dimethylallyl diphosphate = N(6)-dimethylallyladenosine(37) in tRNA + diphosphate. Catalyzes the transfer of a dimethylallyl group onto the adenine at position 37 in tRNAs that read codons beginning with uridine, leading to the formation of N6-(dimethylallyl)adenosine (i(6)A). This Orientia tsutsugamushi (strain Boryong) (Rickettsia tsutsugamushi) protein is tRNA dimethylallyltransferase.